The sequence spans 495 residues: MSQQFQASSGTGSASLREFKTEHEDLREDLPYSTLRTLFGITLDKDASQALNIALLLYGHNYPQQVVPPERNYAELDAQLESVVLEDHTAESTMEPGVSATVTEQLEEKSDKSSDGDGTSKRLTRSLKSVENETEEDHEEKEDEAPQSSRRESTRLKRKLLESQKTVQTTGNSSRASSKSQEKEVPGTKSQCAPKIRTTPEQSKAATKRQSSTTVRASSTCGSSVSSTSTVSSPDYTAKKGRATETPKLEELAPKKQSSATPKPGGEVCVWDGVQIGDLSAQMNAQIGDDEELDTVDIARRILSELKERCIPQTALAEKILARSQGTLSDLLRMPKPWSVMKNGRATFQRMSNWLGLDPDVRRALCFLPKEDVARITGLDEPTPAKRKKTVKVIRLTFTETQLKSLQKSFQQNHRPTREMRQKLSATLELDFSTVGNFFMNSRRRLRIDQQISRSSRSTGNGADTEDELDEEDVVVENVIADATDASNQPGPSHL.

A compositionally biased stretch (polar residues) spans 1-14 (MSQQFQASSGTGSA). Disordered stretches follow at residues 1-24 (MSQQ…TEHE) and 89-267 (TAES…PGGE). The segment covering 106–120 (LEEKSDKSSDGDGTS) has biased composition (basic and acidic residues). A compositionally biased stretch (acidic residues) spans 132-145 (NETEEDHEEKEDEA). Residues 149–162 (SRRESTRLKRKLLE) show a composition bias toward basic and acidic residues. Composition is skewed to polar residues over residues 163-179 (SQKT…ASSK) and 199-217 (TPEQ…TVRA). A compositionally biased stretch (low complexity) spans 218 to 233 (SSTCGSSVSSTSTVSS). Residues 242–254 (RATETPKLEELAP) show a composition bias toward basic and acidic residues. The CUT DNA-binding region spans 284-370 (NAQIGDDEEL…VRRALCFLPK (87 aa)). The homeobox DNA-binding region spans 389–449 (KTVKVIRLTF…MNSRRRLRID (61 aa)). Positions 450-473 (QQISRSSRSTGNGADTEDELDEED) are disordered. The segment covering 464–473 (DTEDELDEED) has biased composition (acidic residues).

It belongs to the CUT homeobox family.

The protein resides in the nucleus. In terms of biological role, probable DNA-binding regulatory protein involved in cell-fate specification. This Caenorhabditis elegans protein is Homeobox protein ceh-21 (ceh-21).